Here is a 349-residue protein sequence, read N- to C-terminus: Increased DNA methylation 2 (349 aa).

Residues 210-230 form a disordered region; the sequence is EDNAGTCTSGEESDVAAKPEV. In terms of domain architecture, sHSP spans 233–349; it reads EAHGGLMVGL…VMKNLQKQTV (117 aa).

Belongs to the small heat shock protein (HSP20) family. Homodimer or oligomer. May form an 16-mer complex. Interacts with MBD7 (via C-terminus). Interacts with IDM1 (via N-terminus). Interacts with IMD3. Part of a complex made of MBD7, IDM1, IDM2, IDM3 and ROS1. In terms of tissue distribution, expressed in cotyledons and hypocotyls in young seedlings.

The protein resides in the nucleus. Its subcellular location is the nucleoplasm. In terms of biological role, prevents DNA hypermethylation and transcriptional silencing of transgenes and of some endogenous genes. May act as a molecular chaperone of IDM1, regulating its H3K18 acetylation activity. The chain is Increased DNA methylation 2 from Arabidopsis thaliana (Mouse-ear cress).